Reading from the N-terminus, the 452-residue chain is Tubulin gamma chain (452 aa).

GTP is bound at residue 142–148; sequence AGGTGSG.

The protein belongs to the tubulin family.

Its subcellular location is the cytoplasm. It is found in the cytoskeleton. The protein localises to the microtubule organizing center. The protein resides in the centrosome. In terms of biological role, tubulin is the major constituent of microtubules. The gamma chain is found at microtubule organizing centers (MTOC) such as the spindle poles or the centrosome, suggesting that it is involved in the minus-end nucleation of microtubule assembly. The sequence is that of Tubulin gamma chain (G-TUB) from Plasmodium falciparum (isolate NF54).